The primary structure comprises 147 residues: MASFRLFLLCLAGLVFVSEAGSVGAGEPKCPLMVKVLDAVRGSPAANVGVKVFKKAADETWEPFASGKTSESGELHGLTTEDKFVEGLYKVELDTKSYWKSLGISPFHEFAEVVFTANDSGPRHYTIAALLSPYSYSTTALVSSPKA.

The N-terminal stretch at 1 to 20 (MASFRLFLLCLAGLVFVSEA) is a signal peptide. C30 bears the Sulfocysteine mark. Residue K35 participates in L-thyroxine binding. 4-carboxyglutamate is present on E62. Phosphoserine is present on S72. E74 is an L-thyroxine binding site. N118 carries N-linked (GlcNAc...) asparagine glycosylation. S137 contacts L-thyroxine.

This sequence belongs to the transthyretin family. Homotetramer. Dimer of dimers. In the homotetramer, subunits assemble around a central channel that can accommodate two ligand molecules. Interacts with RBP4. In terms of processing, sulfonation of the reactive cysteine Cys-30 enhances the stability of the native conformation of TTR, avoiding misassembly of the protein leading to amyloid formation. In terms of tissue distribution, detected in serum (at protein level).

Its subcellular location is the secreted. Functionally, thyroid hormone-binding protein. Probably transports thyroxine from the bloodstream to the brain. In Bos taurus (Bovine), this protein is Transthyretin (TTR).